The chain runs to 262 residues: uncharacterized protein (262 aa).

Residues 6-70 form the S4 RNA-binding domain; that stretch reads LRINQFLAHY…LKNKKFSVLV (65 aa). Asp108 serves as the catalytic Nucleophile.

This sequence belongs to the pseudouridine synthase RsuA family.

It carries out the reaction a uridine in RNA = a pseudouridine in RNA. This is an uncharacterized protein from Helicobacter pylori (strain ATCC 700392 / 26695) (Campylobacter pylori).